The chain runs to 367 residues: Phosphoribosylaminoimidazole-succinocarboxamide synthase (367 aa).

This sequence belongs to the SAICAR synthetase family.

It catalyses the reaction 5-amino-1-(5-phospho-D-ribosyl)imidazole-4-carboxylate + L-aspartate + ATP = (2S)-2-[5-amino-1-(5-phospho-beta-D-ribosyl)imidazole-4-carboxamido]succinate + ADP + phosphate + 2 H(+). Its pathway is purine metabolism; IMP biosynthesis via de novo pathway; 5-amino-1-(5-phospho-D-ribosyl)imidazole-4-carboxamide from 5-amino-1-(5-phospho-D-ribosyl)imidazole-4-carboxylate: step 1/2. This chain is Phosphoribosylaminoimidazole-succinocarboxamide synthase, found in Shewanella frigidimarina (strain NCIMB 400).